The following is a 557-amino-acid chain: Potassium-transporting ATPase potassium-binding subunit (557 aa).

10 helical membrane passes run 4–24, 61–81, 131–151, 174–194, 253–273, 280–300, 375–395, 412–432, 483–503, and 528–548; these read LGAG…VHVP, TYAL…YAFL, GLTV…VALV, LRVL…TGVV, LEVF…GTLV, LAVL…TTWA, GLYG…LMVG, CAAL…AVAL, LAIW…AGAF, and LAVV…LGPI.

The protein belongs to the KdpA family. The system is composed of three essential subunits: KdpA, KdpB and KdpC.

Its subcellular location is the cell membrane. Functionally, part of the high-affinity ATP-driven potassium transport (or Kdp) system, which catalyzes the hydrolysis of ATP coupled with the electrogenic transport of potassium into the cytoplasm. This subunit binds the extracellular potassium ions and delivers the ions to the membrane domain of KdpB through an intramembrane tunnel. The protein is Potassium-transporting ATPase potassium-binding subunit of Kineococcus radiotolerans (strain ATCC BAA-149 / DSM 14245 / SRS30216).